The primary structure comprises 266 residues: Integral membrane protein 2B (266 aa).

Over 1–54 (MVKVTFNSALAQKEAKKDEPKSGEEALIIPPDAVAVDCKDPDDVVPVGQRRAWC) the chain is Cytoplasmic. A helical; Signal-anchor for type II membrane protein membrane pass occupies residues 55–75 (WCMCFGLAFMLAGVILGGAYL). At 76 to 266 (YKYFALQPDD…KFAVETLICS (191 aa)) the chain is on the lumenal side. A necessary for interaction with APP and inhibitor effects on APP processing region spans residues 102–134 (EPSADAPAALYQTIEENIKIFEEEEVEFISVPV). The BRICHOS domain occupies 137-231 (FADSDPANIV…LCHDKETYKL (95 aa)). 2 disulfide bridges follow: Cys-164-Cys-223 and Cys-248-Cys-265. Asn-170 is a glycosylation site (N-linked (GlcNAc...) asparagine).

It belongs to the ITM2 family. In terms of assembly, homodimer; disulfide-linked. Interacts with SPPL2A and SPPL2B. Interacts with APP. Mature BRI2 (mBRI2) interacts with the APP amyloid-beta A4 protein; the interaction occurs at the cell surface and in the endocytic compartments and enable alpha- and beta-secretase-induced APP cleavage inhibition. Mature BRI2 (mBRI2) interacts with the APP C99; the interaction occurs in the endocytic compartments and enable gamma-secretase-induced C99 cleavage inhibition. May form heterodimers with Bri23 peptide and APP amyloid-beta protein 40. Interacts with ADAM7 in sperm; the interaction increases following capacitation. In terms of processing, the ectodomain C-terminal part of the imBRI2 is processed by furin producing a secreted Bri23 peptide and a mature BRI2, membrane form (mBRI2). The remaining part of the ectodomain of mBRI2 containing the BRICHOS domain is cleaved by ADAM10 and is secreted (BRI2C, soluble form). The membrane-bound N-terminal fragment (BRI2C, membrane form) is further proteolytically processed by SPPL2A and SPPL2B through regulated intramembrane proteolysis producing a secreted C-peptide and a BRI2 intracellular domain (BRI2 ICD) released in the cytosol. Shedding by ADAM10 facilitates intramembrane cleavage but is not absolutely required for BRI2 ICD generation. Glycosylation at Asn-170 is important for cell surface localization, but doesn't affect furin- and ADAM10-induced proteolytic processing. In terms of tissue distribution, ubiquitous. Expressed in brain.

It is found in the golgi apparatus membrane. The protein localises to the cell membrane. The protein resides in the endosome membrane. Its subcellular location is the secreted. In terms of biological role, plays a regulatory role in the processing of the amyloid-beta A4 precursor protein (APP) and acts as an inhibitor of the amyloid-beta peptide aggregation and fibrils deposition. Plays a role in the induction of neurite outgrowth. Functions as a protease inhibitor by blocking access of secretases to APP cleavage sites. Mature BRI2 (mBRI2) functions as a modulator of the amyloid-beta A4 precursor protein (APP) processing leading to a strong reduction in the secretion of secretase-processed amyloid-beta protein 40 and amyloid-beta protein 42. Its function is as follows. Bri23 peptide prevents aggregation of APP amyloid-beta protein 42 into toxic oligomers. The chain is Integral membrane protein 2B (ITM2B) from Homo sapiens (Human).